The primary structure comprises 313 residues: WD repeat-containing protein 82-B (313 aa).

6 WD repeats span residues 19 to 58 (ENSD…PKRT), 105 to 144 (GHSK…CQGL), 146 to 184 (HLQG…KGPF), 192 to 231 (DRTC…VMHT), 236 to 276 (NNSK…KVAV), and 280 to 313 (KHTG…TIDD).

The protein belongs to the WD repeat SWD2 family. In terms of assembly, component of the SET1/COMPASS complex. Component of the PNUTS-PP1 phosphatase complex.

The protein localises to the nucleus. Its subcellular location is the chromosome. It localises to the cytoplasm. In terms of biological role, regulatory component of the SET1/COMPASS complex implicated in the tethering of this complex to transcriptional start sites of active genes. Facilitates histone H3 'Lys-4' methylation (H3K4me) via recruitment of the SETD1A or SETD1B to the 'Ser-5' phosphorylated C-terminal domain (CTD) of RNA polymerase II large subunit (POLR2A). Component of the PNUTS-PP1 protein phosphatase complex, a protein phosphatase 1 (PP1) complex that promotes RNA polymerase II transcription pause-release, allowing transcription elongation. In Xenopus laevis (African clawed frog), this protein is WD repeat-containing protein 82-B (wdr82-b).